The chain runs to 573 residues: F-box/WD repeat-containing protein 5 (573 aa).

The F-box domain maps to 3–49 (EGGLPLLPDSLVYQIFLSLGPADVLAAGLVCRQWQAVSRDEFLWKEQ). The WD 1 repeat unit spans residues 90–129 (EHTDQVLHLSFSHSGYQFASCSKDCTVKIWNNDLTISLLH). Serine 151 carries the post-translational modification Phosphoserine; by PLK4. Positions 308–316 (RRVFDSVLD) match the D-box motif. WD repeat units follow at residues 470-509 (TPND…CLAK) and 511-551 (RHED…RVLQ).

Belongs to the FBXW5 family. In terms of assembly, part of the SCF (SKP1-CUL1-F-box) E3 ubiquitin-protein ligase complex SCF(FBXW5) composed of CUL1, SKP1, RBX1 and FBXW5. Component of the DCX(FBXW5) E3 ubiquitin ligase complex, at least composed of (CUL4A or CUL4B), DDB1, FBXW5 and RBX1. Interacts with CDC20, TSC1, TSC2 and SASS6. Interacts with EPS8. Interacts with TNFAIP8L1; TNFAIP8L1 competes with TSC2 to bind FBXW5 increasing TSC2 stability by preventing its ubiquitination. Post-translationally, phosphorylated at Ser-151 by PLK4 during the G1/S transition, leading to inhibit its ability to ubiquitinate SASS6. In terms of processing, ubiquitinated and degraded by the APC/C complex during mitosis and G1 phase. Widely expressed in adult and embryonal tissues.

It localises to the cytoplasm. It functions in the pathway protein modification; protein ubiquitination. Substrate recognition component of both SCF (SKP1-CUL1-F-box protein) and DCX (DDB1-CUL4-X-box) E3 ubiquitin-protein ligase complexes. Substrate-specific adapter of the DCX(FBXW5) E3 ubiquitin-protein ligase complex which mediates the polyubiquitination and subsequent degradation of TSC2. May also act as a negative regulator of MAP3K7/TAK1 signaling in the interleukin-1B (IL1B) signaling pathway. Substrate recognition component of the SCF(FBXW5) E3 ubiquitin-protein ligase complex which mediates the ubiquitination and subsequent proteasomal degradation of SASS6 during S phase, leading to prevent centriole reduplication. The SCF(FBXW5) complex also mediates ubiquitination and degradation of actin-regulator EPS8 during G2 phase, leading to the transient degradation of EPS8 and subsequent cell shape changes required to allow mitotic progression. In Mus musculus (Mouse), this protein is F-box/WD repeat-containing protein 5 (Fbxw5).